A 214-amino-acid polypeptide reads, in one-letter code: Charged multivesicular body protein 2b (214 aa).

Residues 25 to 55 (QRQIARDRTALEKQEKQLEMEIKKMAKTGNR) adopt a coiled-coil conformation. The interval 178–199 (MAHAPSAARKTPSAATAKADGI) is disordered. The short motif at 202–212 (EDIERQLKALG) is the MIT-interacting motif element.

Belongs to the SNF7 family. In terms of assembly, probable core component of the endosomal sorting required for transport complex III (ESCRT-III). ESCRT-III components are thought to multimerize to form a flat lattice on the perimeter membrane of the endosome.

The protein localises to the cytoplasm. Its subcellular location is the cytosol. It localises to the late endosome membrane. Probable core component of the endosomal sorting required for transport complex III (ESCRT-III) which is involved in multivesicular bodies (MVBs) formation and sorting of endosomal cargo proteins into MVBs. MVBs contain intraluminal vesicles (ILVs) that are generated by invagination and scission from the limiting membrane of the endosome and mostly are delivered to lysosomes enabling degradation of membrane proteins, such as stimulated growth factor receptors, lysosomal enzymes and lipids. The chain is Charged multivesicular body protein 2b (chmp2b) from Danio rerio (Zebrafish).